Consider the following 142-residue polypeptide: Ornithine decarboxylase antizyme (142 aa).

Low complexity predominate over residues methionine 1–methionine 19. Positions methionine 1–proline 34 are disordered.

It belongs to the ODC antizyme family. Interacts with ODC1 and thereby sterically blocks ODC homodimerization.

Its function is as follows. Ornithine decarboxylase (ODC) antizyme protein that negatively regulates ODC activity and intracellular polyamine biosynthesis and uptake in response to increased intracellular polyamine levels. Binds to ODC monomers, inhibiting the assembly of the functional ODC homodimer, and targets the monomers for ubiquitin-independent proteolytic destruction by the 26S proteasome. This chain is Ornithine decarboxylase antizyme, found in Pristionchus pacificus (Parasitic nematode).